A 141-amino-acid polypeptide reads, in one-letter code: Elongation factor G, chloroplastic (141 aa).

The region spanning 12 to 141 (KDYRNIGIMA…VPRICFVNKM (130 aa)) is the tr-type G domain. GTP contacts are provided by residues 21 to 28 (AHIDAGKT) and 85 to 89 (DTPGH).

Belongs to the TRAFAC class translation factor GTPase superfamily. Classic translation factor GTPase family. EF-G/EF-2 subfamily.

The protein resides in the plastid. It is found in the chloroplast. Its pathway is protein biosynthesis; polypeptide chain elongation. Functionally, chloroplast-localized elongation factor EF-G involved in protein synthesis in plastids. Catalyzes the GTP-dependent ribosomal translocation step during translation elongation. During this step, the ribosome changes from the pre-translocational (PRE) to the post-translocational (POST) state as the newly formed A-site-bound peptidyl-tRNA and P-site-bound deacylated tRNA move to the P and E sites, respectively. Catalyzes the coordinated movement of the two tRNA molecules, the mRNA and conformational changes in the ribosome. In Pisum sativum (Garden pea), this protein is Elongation factor G, chloroplastic (fusA).